A 344-amino-acid chain; its full sequence is MLLSDLVDLIKKGNSNFISSNIFEDLNIEDAASLDEAVNHQISFLEENNILKEKLDKSNASAIITSNNNEIISALKKLNISNIIVKNPRIAFAEVLNHLYKTINFNPGIHASAVIDKTAIIGADCHIGPNVYIGENTVIGNNNDILTGSSILGNVRIGDNNIIHPNCVVYENTTLKNNCVINSNSVIGSEGFGFIPKDDKWVKMPQKGGVKIMSFVEIGTNCCIDRPAVGITFIDEGTKLDNLVQIGHGVKIGKNCAFAAQVGIAGGAKIGDRVILAGQVGVNNRVKVGNNVIASSKCGIHCDIEDGKVISGFPAMENKSWLRSSSIFKKLPELAKKLRQLDKQ.

Catalysis depends on histidine 248, which acts as the Proton acceptor.

Belongs to the transferase hexapeptide repeat family. LpxD subfamily. In terms of assembly, homotrimer.

It catalyses the reaction a UDP-3-O-[(3R)-3-hydroxyacyl]-alpha-D-glucosamine + a (3R)-hydroxyacyl-[ACP] = a UDP-2-N,3-O-bis[(3R)-3-hydroxyacyl]-alpha-D-glucosamine + holo-[ACP] + H(+). Its pathway is bacterial outer membrane biogenesis; LPS lipid A biosynthesis. Its function is as follows. Catalyzes the N-acylation of UDP-3-O-acylglucosamine using 3-hydroxyacyl-ACP as the acyl donor. Is involved in the biosynthesis of lipid A, a phosphorylated glycolipid that anchors the lipopolysaccharide to the outer membrane of the cell. This is UDP-3-O-acylglucosamine N-acyltransferase from Prochlorococcus marinus (strain MIT 9312).